The following is a 739-amino-acid chain: MPFPVTTQGSQQTQPPQRHYGITSPISLAAPKETDCLLTQKLIETLKPFGVFEEEEELQRRILILGKLNNLVKEWIREISESKNLPQSVIENVGGKIFTFGSYRLGVHTKGADIDALCVAPRHVDRSDFFTSFYDKLKLQEEVKDLRAVEEAFVPVIKLCFDGIEIDILFARLALQTIPEDLDLRDDSLLKNLDIRCIRSLNGCRVTDEILHLVPNIDNFRLTLRAIKLWAKRHNIYSNILGFLGGVSWAMLVARTCQLYPNAIASTLVHKFFLVFSKWEWPNPVLLKQPEECNLNLPVWDPRVNPSDRYHLMPIITPAYPQQNSTYNVSVSTRMVMVEEFKQGLAITDEILLSKAEWSKLFEAPNFFQKYKHYIVLLASAPTEKQRLEWVGLVESKIRILVGSLEKNEFITLAHVNPQSFPAPKESPDREEFRTMWVIGLVFKKTENSENLSVDLTYDIQSFTDTVYRQAINSKMFELDMKIAAMHVKRKQLHQLLPSHVLQKRKKHSTEGVKLTALNDSSLDLSMDSDNSMSVPSPTSAMKTSPLNSSGSSQGRNSPAPAVTAASVTSIQASEVSVPQANSSESPGGPSSESIPQTATQPAISPPPKPTVSRVVSSTRLVNPSPRPSGNTATKVPNPIVGVKRTSSPNKEESPKKTKTEEDETSEDANCLALSGHDKTETKEQVDLETSAVQSETVPASASLLASQKTSSTDLSDIPALPANPIPVIKNSIKLRLNR.

Positions Met1–Gln17 are enriched in low complexity. Positions Met1 to Ile22 are disordered. Ser10 and Ser24 each carry phosphoserine. ATP contacts are provided by residues Phe100–Ser102, Thr109, Asp113–Asp115, Asp167, Lys228, Tyr237, and Gly246–Val247. Mg(2+) is bound by residues Asp113, Asp115, and Asp167. Glycyl lysine isopeptide (Lys-Gly) (interchain with G-Cter in SUMO) cross-links involve residues Lys444, Lys445, Lys506, and Lys507. The Nuclear localization signal 1 motif lies at Arg490–Lys507. The ser/Thr-rich stretch occupies residues His508 to Val643. Positions Leu523 to Ser534 are enriched in low complexity. The interval Leu523–Pro725 is disordered. The segment covering Val535–Asn557 has biased composition (polar residues). A Phosphoserine; by MAPK modification is found at Ser537. Ser558 is modified (phosphoserine). A compositionally biased stretch (polar residues) spans Ala566–Asn582. Composition is skewed to low complexity over residues Ser583–Ser594 and Thr611–Val622. Residues Lys635 and Lys644 each carry the N6-acetyllysine modification. The Nuclear localization signal 2 motif lies at Lys644–Lys659. Composition is skewed to basic and acidic residues over residues Asn650–Thr660 and Gly676–Val686. Residues Cys671–Arg739 form a required for interaction with NUDT21 region. Positions Ser691–Leu715 are enriched in polar residues. At Lys730 the chain carries N6-acetyllysine; alternate. Lys730 participates in a covalent cross-link: Glycyl lysine isopeptide (Lys-Gly) (interchain with G-Cter in SUMO); alternate. Ser732 is modified (phosphoserine). N6-acetyllysine; alternate is present on Lys734. A Glycyl lysine isopeptide (Lys-Gly) (interchain with G-Cter in SUMO); alternate cross-link involves residue Lys734.

The protein belongs to the poly(A) polymerase family. As to quaternary structure, monomer. Found in a complex with CPSF1, FIP1L1 and PAPOLA. Interacts with AHCYL1 and FIP1L1; the interaction with AHCYL1 seems to increase interaction with FIP1L1. Interacts with NUDT21; the interaction is diminished by acetylation. Interacts with KPNB1; the interaction promotes PAP nuclear import and is inhibited by acetylation of PAP. It depends on Mg(2+) as a cofactor. Mn(2+) serves as cofactor. In terms of processing, polysumoylated. Varying sumoylation depending on tissue- and cell-type. Highly sumoylated in bladder and NIH 3T3 cells. Sumoylation is required for nuclear localization and enhances PAP stability. Desumoylated by SENP1. Inhibits polymerase activity. Hyperphosphorylation on multiple CDK2 consensus and non-consensus sites in the C-terminal Ser/Thr-rich region represses PAP activity in late M-phase. Phosphorylation/dephosphorylation may regulate the interaction between PAP and CPSF. Post-translationally, acetylated in the C-terminus. Acetylation decreases interaction with NUDT21 and KPNB1, and inhibits nuclear localization through inhibiting binding to the importin alpha/beta complex. Expressed in brain, thymus, lung, kidney, bladder, testis and spleen.

It localises to the nucleus. It catalyses the reaction RNA(n) + ATP = RNA(n)-3'-adenine ribonucleotide + diphosphate. Its function is as follows. Polymerase that creates the 3'-poly(A) tail of mRNA's. Also required for the endoribonucleolytic cleavage reaction at some polyadenylation sites. May acquire specificity through interaction with a cleavage and polyadenylation specificity factor (CPSF) at its C-terminus. This chain is Poly(A) polymerase alpha (Papola), found in Mus musculus (Mouse).